The primary structure comprises 602 residues: Elongation factor 4 (602 aa).

The 183-residue stretch at 6–188 (DRIRNFCIIA…RIVRDVPPPG (183 aa)) folds into the tr-type G domain. GTP contacts are provided by residues 18–23 (DHGKST) and 135–138 (NKID).

This sequence belongs to the TRAFAC class translation factor GTPase superfamily. Classic translation factor GTPase family. LepA subfamily.

The protein resides in the cell membrane. The enzyme catalyses GTP + H2O = GDP + phosphate + H(+). Required for accurate and efficient protein synthesis under certain stress conditions. May act as a fidelity factor of the translation reaction, by catalyzing a one-codon backward translocation of tRNAs on improperly translocated ribosomes. Back-translocation proceeds from a post-translocation (POST) complex to a pre-translocation (PRE) complex, thus giving elongation factor G a second chance to translocate the tRNAs correctly. Binds to ribosomes in a GTP-dependent manner. This chain is Elongation factor 4, found in Desulforudis audaxviator (strain MP104C).